A 570-amino-acid chain; its full sequence is Endo-1,4-beta-xylanase 4 (570 aa).

Positions 1-24 (MKRFNYGFFHLVLFLISLLLLGSG) are cleaved as a signal peptide. Asn-92, Asn-190, and Asn-300 each carry an N-linked (GlcNAc...) asparagine glycan. Residues 195-494 (EGSVISIEQI…TQAGDLIDKL (300 aa)) form the GH10 domain. Glu-325 functions as the Proton donor in the catalytic mechanism. Asn-339 carries N-linked (GlcNAc...) asparagine glycosylation. Catalysis depends on Glu-432, which acts as the Nucleophile. A glycan (N-linked (GlcNAc...) asparagine) is linked at Asn-545.

It belongs to the glycosyl hydrolase 10 (cellulase F) family.

The enzyme catalyses Endohydrolysis of (1-&gt;4)-beta-D-xylosidic linkages in xylans.. It functions in the pathway glycan degradation; xylan degradation. Its function is as follows. Binds to and hydrolyzes insoluble and soluble xylan substrates. The sequence is that of Endo-1,4-beta-xylanase 4 from Arabidopsis thaliana (Mouse-ear cress).